A 246-amino-acid chain; its full sequence is Acetylglutamate kinase (246 aa).

Substrate is bound by residues 30 to 31, Arg-52, and Asn-151; that span reads GG.

Belongs to the acetylglutamate kinase family. ArgB subfamily.

It localises to the cytoplasm. It catalyses the reaction N-acetyl-L-glutamate + ATP = N-acetyl-L-glutamyl 5-phosphate + ADP. The protein operates within amino-acid biosynthesis; L-arginine biosynthesis; N(2)-acetyl-L-ornithine from L-glutamate: step 2/4. Its function is as follows. Catalyzes the ATP-dependent phosphorylation of N-acetyl-L-glutamate. This Methanopyrus kandleri (strain AV19 / DSM 6324 / JCM 9639 / NBRC 100938) protein is Acetylglutamate kinase.